The primary structure comprises 1090 residues: UPF0507 protein EC1118_1M3_1541g (1090 aa).

Positions Phe289–Asn436 constitute a VPS9 domain.

Belongs to the UPF0507 family.

In Saccharomyces cerevisiae (strain Lalvin EC1118 / Prise de mousse) (Baker's yeast), this protein is UPF0507 protein EC1118_1M3_1541g.